The chain runs to 171 residues: Ribosome maturation factor RimP (171 aa).

This sequence belongs to the RimP family.

It is found in the cytoplasm. Its function is as follows. Required for maturation of 30S ribosomal subunits. The sequence is that of Ribosome maturation factor RimP from Anaeromyxobacter sp. (strain Fw109-5).